Reading from the N-terminus, the 899-residue chain is Semaphorin-1A (899 aa).

Residues 1–20 show a composition bias toward low complexity; that stretch reads MLNSHNTNHNNNSASNSNYN. Residues 1–24 are disordered; sequence MLNSHNTNHNNNSASNSNYNKGHK. Over 1-40 the chain is Cytoplasmic; the sequence is MLNSHNTNHNNNSASNSNYNKGHKMHLKSATAKATIMKHK. Residues 41–61 form a helical membrane-spanning segment; the sequence is LSKFYGYGWMQVFLLLTVLVI. Over 62–657 the chain is Extracellular; that stretch reads GNQSAWQENI…INAQYTVETL (596 aa). Residues Asn-63, Asn-90, and Asn-117 are each glycosylated (N-linked (GlcNAc...) asparagine). The Sema domain occupies 74-543; that stretch reads KLYVELGPED…TDSQVVAIQL (470 aa). Disulfide bonds link Cys-141–Cys-151 and Cys-169–Cys-178. N-linked (GlcNAc...) asparagine glycans are attached at residues Asn-187, Asn-207, and Asn-311. 2 cysteine pairs are disulfide-bonded: Cys-288-Cys-402 and Cys-312-Cys-361. Residue Asn-404 is glycosylated (N-linked (GlcNAc...) asparagine). Residues 658–678 traverse the membrane as a helical segment; the sequence is VMAVLAGSIFSLLVGFFTGYF. Over 679-899 the chain is Cytoplasmic; that stretch reads CGRRCHKDED…PKNCSYIYRD (221 aa). Disordered regions lie at residues 735–766 and 798–899; these read VLLP…QGPN and VMGD…IYRD. The segment covering 809 to 827 has biased composition (polar residues); sequence FSTTRSVKKAVNNTNTRNR. Residues 828–837 are compositionally biased toward basic residues; that stretch reads SLGRARRQPP. Over residues 847 to 876 the composition is skewed to low complexity; sequence SNSPQQQQQQSQQPHSSSGSSPVMSNSSSS.

It belongs to the semaphorin family. Expressed by subsets of neurons and muscles.

The protein localises to the cell membrane. Functionally, involved in growth cone guidance through its role in axonal repulsion. Function in neurons is essential for adult survival, motor neuron survival, and is important for climbing behavior and activity. This is Semaphorin-1A from Drosophila melanogaster (Fruit fly).